Here is a 289-residue protein sequence, read N- to C-terminus: Elongation factor Ts (289 aa).

Residues threonine 82–valine 85 are involved in Mg(2+) ion dislocation from EF-Tu.

Belongs to the EF-Ts family.

The protein localises to the cytoplasm. Functionally, associates with the EF-Tu.GDP complex and induces the exchange of GDP to GTP. It remains bound to the aminoacyl-tRNA.EF-Tu.GTP complex up to the GTP hydrolysis stage on the ribosome. This chain is Elongation factor Ts, found in Chloroherpeton thalassium (strain ATCC 35110 / GB-78).